A 75-amino-acid chain; its full sequence is MKKDLHPEYKRTMASCACGNTLEVGSTRDEIKVEICSKCHPFFTGKQKLVDTAGRIDRFKKKYAGFDAAAAAKKK.

4 residues coordinate Zn(2+): cysteine 16, cysteine 18, cysteine 36, and cysteine 39.

This sequence belongs to the bacterial ribosomal protein bL31 family. Type A subfamily. Part of the 50S ribosomal subunit. Requires Zn(2+) as cofactor.

In terms of biological role, binds the 23S rRNA. This is Large ribosomal subunit protein bL31 from Desulforapulum autotrophicum (strain ATCC 43914 / DSM 3382 / VKM B-1955 / HRM2) (Desulfobacterium autotrophicum).